Here is a 1191-residue protein sequence, read N- to C-terminus: uncharacterized protein (1191 aa).

11 WD repeats span residues 558-588, 599-629, 640-670, 682-712, 723-753, 764-794, 805-835, 995-1025, 1036-1066, 1077-1107, and 1118-1148; these read GHRD…HLWT, GHTG…KIWD, GHQD…RLWH, GHTK…RLWD, LPEV…RLWT, GHDE…IHWS, GYPE…KVWD, QRKE…TLWN, AHGD…KIWS, SDPL…RLWD, and STSG…QSWP.

This is an uncharacterized protein from Synechocystis sp. (strain ATCC 27184 / PCC 6803 / Kazusa).